Consider the following 850-residue polypeptide: Pierisin (850 aa).

Ricin B-type lectin domains lie at 267–409 (GEFM…WNII), 413–560 (FRPI…WDIK), and 564–707 (YQYV…WYLK).

Belongs to the pierisin ADP-ribosyltransferase family.

It carries out the reaction a 2'-deoxyguanosine in DNA + NAD(+) = an N(2)-(ADP-L-ribosyl)-2'-deoxyguanosine in DNA + nicotinamide + H(+). Functionally, ADP-ribosylates double-stranded DNA by targeting the N2 amino group of dG residues. Induces apoptosis in a range of human cell lines. May play a role in destroying cells during pupation and/or defense against parasites. The protein is Pierisin of Pieris brassicae (White butterfly).